A 128-amino-acid chain; its full sequence is Probable prefoldin subunit 6 (128 aa).

It belongs to the prefoldin subunit beta family. Heterohexamer of two PFD-alpha type and four PFD-beta type subunits.

The protein localises to the cytoplasm. Functionally, binds specifically to cytosolic chaperonin (c-CPN) and transfers target proteins to it. Binds to nascent polypeptide chain and promotes folding in an environment in which there are many competing pathways for nonnative proteins. Required for positioning of the mitotic spindle. The chain is Probable prefoldin subunit 6 from Caenorhabditis briggsae.